A 1417-amino-acid chain; its full sequence is Cytoadherence-linked asexual protein 3.1 (1417 aa).

The signal sequence occupies residues 1 to 24 (MVSFFKTPIFILIIFLYLNEKVIC). 4 cysteine pairs are disulfide-bonded: Cys-333/Cys-361, Cys-407/Cys-413, Cys-517/Cys-545, and Cys-521/Cys-542. A helical transmembrane segment spans residues 1204–1224 (LANGFMYAFCFFAISQMYAYF). Residues 1383–1417 (TYIDTEKMNEADSADSDDEKDSDTPDDELMISRFH) form a disordered region. The span at 1394-1411 (DSADSDDEKDSDTPDDEL) shows a compositional bias: acidic residues.

In terms of assembly, self-associates. Component of the RhopH complex. RhopH complex is at least composed of CLAG3.1/CLAG3.2, RhopH2 and RhopH3 with a 1:1:1 subunit stoichiometry. CLAG3.1/CLAG3.2 mediates subunit association through independent contacts with RhopH2 and RhopH3, which do not directly interact with one another. Interacts with RhopH2. Interacts with RhopH3.

The protein resides in the host cell membrane. It localises to the host cytoplasm. Its subcellular location is the cytoplasmic vesicle. It is found in the secretory vesicle. The protein localises to the rhoptry. Its function is as follows. Participates in the formation of new permeability pathways in Plasmodium-infected erythrocytes enabling the uptake of nutrients from the blood plasma. This Plasmodium falciparum protein is Cytoadherence-linked asexual protein 3.1.